The chain runs to 262 residues: Zinc import ATP-binding protein ZnuC (262 aa).

The ABC transporter domain occupies 5-220 (VSLEQLCVEF…PSYIALFGNA (216 aa)). ATP is bound at residue 37 to 44 (GPNGAGKS). Residues 236–262 (HHDLSGSPVSGDATSCSNHNHGHHHHD) are disordered.

Belongs to the ABC transporter superfamily. Zinc importer (TC 3.A.1.15.5) family. In terms of assembly, the complex is composed of two ATP-binding proteins (ZnuC), two transmembrane proteins (ZnuB) and a solute-binding protein (ZnuA).

The protein localises to the cell inner membrane. It carries out the reaction Zn(2+)(out) + ATP(in) + H2O(in) = Zn(2+)(in) + ADP(in) + phosphate(in) + H(+)(in). In terms of biological role, part of the ABC transporter complex ZnuABC involved in zinc import. Responsible for energy coupling to the transport system. This Vibrio parahaemolyticus serotype O3:K6 (strain RIMD 2210633) protein is Zinc import ATP-binding protein ZnuC.